Reading from the N-terminus, the 230-residue chain is uncharacterized protein (230 aa).

A helical transmembrane segment spans residues Val-93–Phe-115.

Belongs to the DUP/COS family.

It localises to the membrane. This is an uncharacterized protein from Saccharomyces cerevisiae (strain ATCC 204508 / S288c) (Baker's yeast).